The chain runs to 155 residues: Ribosome maturation factor RimP (155 aa).

The protein belongs to the RimP family.

The protein localises to the cytoplasm. Required for maturation of 30S ribosomal subunits. The protein is Ribosome maturation factor RimP of Prochlorococcus marinus (strain SARG / CCMP1375 / SS120).